A 185-amino-acid polypeptide reads, in one-letter code: MANAIVEKAKERFEQSHQSLAREFGSIRAGRANASLLDRIEVEYYGVPTPLNQLASITVPEARVLLVSPFDKSSLKDIEHAINASDIGINPANDGSVIRLVIPALTEETRKELAKEVKKVGENAKVAIRNIRRDAMDEAKKQEKIKEITEDELKSLEKDIQKVTDEAVKHIDSMTANKEKELLEV.

The protein belongs to the RRF family.

Its subcellular location is the cytoplasm. In terms of biological role, responsible for the release of ribosomes from messenger RNA at the termination of protein biosynthesis. May increase the efficiency of translation by recycling ribosomes from one round of translation to another. The chain is Ribosome-recycling factor from Streptococcus mutans serotype c (strain ATCC 700610 / UA159).